Here is a 135-residue protein sequence, read N- to C-terminus: Photosystem II extrinsic protein U (135 aa).

Positions 1 to 26 are cleaved as a signal peptide; sequence MKNLVRLLAVIALIIGSFWGKVPAQA.

The protein belongs to the PsbU family. In terms of assembly, PSII is composed of 1 copy each of membrane proteins PsbA, PsbB, PsbC, PsbD, PsbE, PsbF, PsbH, PsbI, PsbJ, PsbK, PsbL, PsbM, PsbT, PsbX, PsbY, PsbZ, Psb30/Ycf12, peripheral proteins PsbO, CyanoQ (PsbQ), PsbU, PsbV and a large number of cofactors. It forms dimeric complexes.

The protein resides in the cellular thylakoid membrane. In terms of biological role, one of the extrinsic, lumenal subunits of photosystem II (PSII). PSII is a light-driven water plastoquinone oxidoreductase, using light energy to abstract electrons from H(2)O, generating a proton gradient subsequently used for ATP formation. The extrinsic proteins stabilize the structure of photosystem II oxygen-evolving complex (OEC), the ion environment of oxygen evolution and protect the OEC against heat-induced inactivation. The sequence is that of Photosystem II extrinsic protein U from Microcystis aeruginosa (strain NIES-843 / IAM M-2473).